A 1276-amino-acid chain; its full sequence is Probable histone acetyltransferase HAC-like 3 (1276 aa).

A disordered region spans residues 391-421; sequence VDRAEQTSNSTVSKPTSPASDGSSGKHYPAK. Positions 396 to 413 are enriched in polar residues; sequence QTSNSTVSKPTSPASDGS. The segment at 621 to 689 adopts a PHD-type zinc-finger fold; sequence SSICGRCHHL…EYTCAKCFLK (69 aa). A CBP/p300-type HAT domain is found at 704 to 1130; it reads ILGARELPRT…ILYHLHDSTC (427 aa). Residues 827-829, 846-847, and W902 each bind acetyl-CoA; these read IDS and RT. A coiled-coil region spans residues 953-973; that stretch reads EAERLLEKKDDDTSQKKETQL. 2 consecutive ZZ-type zinc fingers follow at residues 1013-1076 and 1125-1187; these read CLQQ…EEPL and LHDS…LQDY. The Zn(2+) site is built by C1018, C1021, C1033, C1036, C1042, C1045, H1058, H1066, C1130, C1133, C1145, C1148, C1154, C1157, H1168, and H1177. The segment at 1177–1260 adopts a TAZ-type zinc-finger fold; the sequence is HVLQKYTLQD…DCSAPRCRDI (84 aa).

It is found in the nucleus. It carries out the reaction L-lysyl-[protein] + acetyl-CoA = N(6)-acetyl-L-lysyl-[protein] + CoA + H(+). Its function is as follows. Acetyltransferase enzyme. Acetylates histones, giving a specific tag for transcriptional activation. This is Probable histone acetyltransferase HAC-like 3 from Oryza sativa subsp. japonica (Rice).